A 288-amino-acid chain; its full sequence is Movement protein (288 aa).

The protein belongs to the cucumovirus movement protein family.

The protein resides in the host cell junction. The protein localises to the host plasmodesma. Functionally, transports viral genome to neighboring plant cells directly through plasmosdesmata, without any budding. The movement protein allows efficient cell to cell propagation, by bypassing the host cell wall barrier. Acts by forming a tubular structure at the host plasmodesmata, enlarging it enough to allow free passage of virion capsids. This chain is Movement protein, found in Apium graveolens (Celery).